Reading from the N-terminus, the 306-residue chain is 4-hydroxy-3-methylbut-2-enyl diphosphate reductase (306 aa).

Cys-12 contributes to the [4Fe-4S] cluster binding site. Residues His-41 and His-74 each coordinate (2E)-4-hydroxy-3-methylbut-2-enyl diphosphate. The dimethylallyl diphosphate site is built by His-41 and His-74. Isopentenyl diphosphate is bound by residues His-41 and His-74. Cys-96 lines the [4Fe-4S] cluster pocket. His-124 provides a ligand contact to (2E)-4-hydroxy-3-methylbut-2-enyl diphosphate. A dimethylallyl diphosphate-binding site is contributed by His-124. Position 124 (His-124) interacts with isopentenyl diphosphate. The active-site Proton donor is the Glu-126. (2E)-4-hydroxy-3-methylbut-2-enyl diphosphate is bound at residue Thr-164. Cys-194 contacts [4Fe-4S] cluster. (2E)-4-hydroxy-3-methylbut-2-enyl diphosphate-binding residues include Ser-222, Ser-223, Asn-224, and Ser-266. The dimethylallyl diphosphate site is built by Ser-222, Ser-223, Asn-224, and Ser-266. Isopentenyl diphosphate-binding residues include Ser-222, Ser-223, Asn-224, and Ser-266.

It belongs to the IspH family. The cofactor is [4Fe-4S] cluster.

The catalysed reaction is isopentenyl diphosphate + 2 oxidized [2Fe-2S]-[ferredoxin] + H2O = (2E)-4-hydroxy-3-methylbut-2-enyl diphosphate + 2 reduced [2Fe-2S]-[ferredoxin] + 2 H(+). It catalyses the reaction dimethylallyl diphosphate + 2 oxidized [2Fe-2S]-[ferredoxin] + H2O = (2E)-4-hydroxy-3-methylbut-2-enyl diphosphate + 2 reduced [2Fe-2S]-[ferredoxin] + 2 H(+). It participates in isoprenoid biosynthesis; dimethylallyl diphosphate biosynthesis; dimethylallyl diphosphate from (2E)-4-hydroxy-3-methylbutenyl diphosphate: step 1/1. It functions in the pathway isoprenoid biosynthesis; isopentenyl diphosphate biosynthesis via DXP pathway; isopentenyl diphosphate from 1-deoxy-D-xylulose 5-phosphate: step 6/6. Its function is as follows. Catalyzes the conversion of 1-hydroxy-2-methyl-2-(E)-butenyl 4-diphosphate (HMBPP) into a mixture of isopentenyl diphosphate (IPP) and dimethylallyl diphosphate (DMAPP). Acts in the terminal step of the DOXP/MEP pathway for isoprenoid precursor biosynthesis. This chain is 4-hydroxy-3-methylbut-2-enyl diphosphate reductase, found in Ruthia magnifica subsp. Calyptogena magnifica.